The following is a 318-amino-acid chain: NADH-ubiquinone oxidoreductase chain 1 (318 aa).

Helical transmembrane passes span phenylalanine 2–leucine 22, methionine 70–proline 90, leucine 100–glycine 120, alanine 147–isoleucine 167, histidine 171–alanine 191, phenylalanine 223–phenylalanine 243, glutamate 253–isoleucine 273, and leucine 294–isoleucine 314.

Belongs to the complex I subunit 1 family. Core subunit of respiratory chain NADH dehydrogenase (Complex I) which is composed of 45 different subunits.

The protein localises to the mitochondrion inner membrane. The enzyme catalyses a ubiquinone + NADH + 5 H(+)(in) = a ubiquinol + NAD(+) + 4 H(+)(out). Functionally, core subunit of the mitochondrial membrane respiratory chain NADH dehydrogenase (Complex I) which catalyzes electron transfer from NADH through the respiratory chain, using ubiquinone as an electron acceptor. Essential for the catalytic activity and assembly of complex I. The polypeptide is NADH-ubiquinone oxidoreductase chain 1 (MT-ND1) (Canis lupus familiaris (Dog)).